Consider the following 309-residue polypeptide: Malate dehydrogenase (309 aa).

NAD(+) is bound by residues 10-15 (GAGNVG) and D34. Substrate-binding residues include R83 and R89. Residues N96 and 119–121 (VSN) contribute to the NAD(+) site. Residues N121 and R152 each contribute to the substrate site. H176 (proton acceptor) is an active-site residue.

Belongs to the LDH/MDH superfamily. MDH type 3 family.

It carries out the reaction (S)-malate + NAD(+) = oxaloacetate + NADH + H(+). Its function is as follows. Catalyzes the reversible oxidation of malate to oxaloacetate. This chain is Malate dehydrogenase, found in Heliobacterium modesticaldum (strain ATCC 51547 / Ice1).